Reading from the N-terminus, the 144-residue chain is Transcriptional regulator SlyA (144 aa).

One can recognise an HTH marR-type domain in the interval 2–135; the sequence is ESPLGSDLAR…LLHLIRKLEQ (134 aa). The H-T-H motif DNA-binding region spans 49 to 72; it reads QIQLAKAIGIEQPSLVRTLDQLEE.

Belongs to the SlyA family. As to quaternary structure, homodimer.

Its function is as follows. Transcription regulator that can specifically activate or repress expression of target genes. This Klebsiella pneumoniae (strain 342) protein is Transcriptional regulator SlyA.